An 83-amino-acid polypeptide reads, in one-letter code: ATP synthase subunit c (83 aa).

The next 2 membrane-spanning stretches (helical) occupy residues 9-29 (LICV…GIGI) and 51-71 (MVFM…GLVI).

This sequence belongs to the ATPase C chain family. As to quaternary structure, F-type ATPases have 2 components, F(1) - the catalytic core - and F(0) - the membrane proton channel. F(1) has five subunits: alpha(3), beta(3), gamma(1), delta(1), epsilon(1). F(0) has three main subunits: a(1), b(2) and c(10-14). The alpha and beta chains form an alternating ring which encloses part of the gamma chain. F(1) is attached to F(0) by a central stalk formed by the gamma and epsilon chains, while a peripheral stalk is formed by the delta and b chains.

Its subcellular location is the cell inner membrane. Functionally, f(1)F(0) ATP synthase produces ATP from ADP in the presence of a proton or sodium gradient. F-type ATPases consist of two structural domains, F(1) containing the extramembraneous catalytic core and F(0) containing the membrane proton channel, linked together by a central stalk and a peripheral stalk. During catalysis, ATP synthesis in the catalytic domain of F(1) is coupled via a rotary mechanism of the central stalk subunits to proton translocation. In terms of biological role, key component of the F(0) channel; it plays a direct role in translocation across the membrane. A homomeric c-ring of between 10-14 subunits forms the central stalk rotor element with the F(1) delta and epsilon subunits. The sequence is that of ATP synthase subunit c from Desulfotalea psychrophila (strain LSv54 / DSM 12343).